Reading from the N-terminus, the 533-residue chain is E3 ubiquitin-protein ligase MGRN1 (533 aa).

Residue Gly-2 is the site of N-myristoyl glycine attachment. An RING-type zinc finger spans residues 278–317; the sequence is ECVVCLSDLRDTLILPCRHLCLCTSCADTLRYQANNCPIC. Positions 385–388 match the Required for TSG101-binding motif; sequence PSAP. Tyr-390 carries the post-translational modification Phosphotyrosine. The interval 421-519 is disordered; sequence QKGKTQSKSP…QPVPPADIYL (99 aa). Over residues 423 to 439 the composition is skewed to polar residues; the sequence is GKTQSKSPDSTLRSPSS. Residues Ser-429, Ser-450, and Ser-502 each carry the phosphoserine modification. Residues 443-454 are compositionally biased toward acidic residues; the sequence is EEDEEKLSEDPE.

Interacts with MC1R and MC4R. Interacts with TSG101. Interacts with mislocalized cytosolically exposed PRNP; this interaction alters MGRN1 subcellular location and causes lysosomal enlargement. Post-translationally, autoubiquitinated in vitro.

Its subcellular location is the cytoplasm. It is found in the cytosol. The protein localises to the cell membrane. It localises to the early endosome. The enzyme catalyses S-ubiquitinyl-[E2 ubiquitin-conjugating enzyme]-L-cysteine + [acceptor protein]-L-lysine = [E2 ubiquitin-conjugating enzyme]-L-cysteine + N(6)-ubiquitinyl-[acceptor protein]-L-lysine.. The protein operates within protein modification; protein ubiquitination. Its function is as follows. E3 ubiquitin-protein ligase. Mediates TSG101 monoubiquitination at multiple sites. Plays a role in the regulation of endosome-to-lysosome trafficking. Impairs MC1R- and MC4R-signaling by competing with GNAS-binding to MCRs and inhibiting agonist-induced cAMP production. Does not inhibit ADRB2-signaling. Does not promote MC1R ubiquitination. Also acts as a negative regulator of hedgehog signaling. This Rattus norvegicus (Rat) protein is E3 ubiquitin-protein ligase MGRN1 (Mgrn1).